We begin with the raw amino-acid sequence, 197 residues long: Beta-crystallin A2 (197 aa).

The N-terminal arm stretch occupies residues 1–11 (MSSAPAPGPAP). Beta/gamma crystallin 'Greek key' domains lie at 12 to 52 (ASLT…KVEN) and 53 to 99 (GVWV…RPVL). The interval 100 to 105 (CANHND) is connecting peptide. Beta/gamma crystallin 'Greek key' domains follow at residues 106 to 147 (SRVT…KVSS) and 148 to 196 (GAWV…RRVQ).

The protein belongs to the beta/gamma-crystallin family. As to quaternary structure, homo/heterodimer, or complexes of higher-order. The structure of beta-crystallin oligomers seems to be stabilized through interactions between the N-terminal arms.

In terms of biological role, crystallins are the dominant structural components of the vertebrate eye lens. This is Beta-crystallin A2 (CRYBA2) from Homo sapiens (Human).